The chain runs to 180 residues: ATP-dependent protease subunit HslV (180 aa).

Thr7 is a catalytic residue. Na(+) is bound by residues Ala162, Cys165, and Thr168.

It belongs to the peptidase T1B family. HslV subfamily. In terms of assembly, a double ring-shaped homohexamer of HslV is capped on each side by a ring-shaped HslU homohexamer. The assembly of the HslU/HslV complex is dependent on binding of ATP.

It is found in the cytoplasm. It carries out the reaction ATP-dependent cleavage of peptide bonds with broad specificity.. Allosterically activated by HslU binding. Functionally, protease subunit of a proteasome-like degradation complex believed to be a general protein degrading machinery. The polypeptide is ATP-dependent protease subunit HslV (Dichelobacter nodosus (strain VCS1703A)).